Here is a 281-residue protein sequence, read N- to C-terminus: ATP phosphoribosyltransferase (281 aa).

Belongs to the ATP phosphoribosyltransferase family. Long subfamily. Equilibrium between an active dimeric form, an inactive hexameric form and higher aggregates. Interconversion between the various forms is largely reversible and is influenced by the natural substrates and inhibitors of the enzyme. It depends on Mg(2+) as a cofactor.

It is found in the cytoplasm. It carries out the reaction 1-(5-phospho-beta-D-ribosyl)-ATP + diphosphate = 5-phospho-alpha-D-ribose 1-diphosphate + ATP. The protein operates within amino-acid biosynthesis; L-histidine biosynthesis; L-histidine from 5-phospho-alpha-D-ribose 1-diphosphate: step 1/9. With respect to regulation, feedback inhibited by histidine. Functionally, catalyzes the condensation of ATP and 5-phosphoribose 1-diphosphate to form N'-(5'-phosphoribosyl)-ATP (PR-ATP). Has a crucial role in the pathway because the rate of histidine biosynthesis seems to be controlled primarily by regulation of HisG enzymatic activity. This chain is ATP phosphoribosyltransferase, found in Mycolicibacterium gilvum (strain PYR-GCK) (Mycobacterium gilvum (strain PYR-GCK)).